A 400-amino-acid chain; its full sequence is Zinc finger CCHC domain-containing protein 3 (400 aa).

Positions 1–157 are disordered; the sequence is MATGGGAEEE…LQDEPPAAGP (157 aa). 2 stretches are compositionally biased toward basic and acidic residues: residues 26-38 and 47-63; these read ARVEEPEGVREKM and LAEKKGDFREPRRRDET. Positions 66-75 are enriched in gly residues; it reads GASGGLGSPG. Residues 91 to 109 are compositionally biased toward basic and acidic residues; sequence GDPKGRRRDPTGEASDAYR. Phosphotyrosine is present on Tyr-198. 2 CCHC-type zinc fingers span residues 349–365 and 369–384; these read RCFRCGEEGHLSPYCRK and CNLCGKRGHAFAQCPK.

In terms of assembly, interacts with CGAS. Interacts with RIGI. Interacts with IFIH1/MDA5.

The protein resides in the cytoplasm. Functionally, nucleic acid-binding protein involved in innate immune response to DNA and RNA viruses. Binds DNA and RNA in the cytoplasm and acts by promoting recognition of viral nucleic acids by virus sensors, such as RIGI, IFIH1/MDA5 and CGAS. Acts as a co-sensor for recognition of double-stranded DNA (dsDNA) by cGAS in the cytoplasm, thereby playing a role in innate immune response to cytosolic dsDNA and DNA virus. Binds dsDNA and probably acts by promoting sensing of dsDNA by CGAS, leading to enhance CGAS oligomerization and activation. Promotes sensing of viral RNA by RIG-I-like receptors proteins RIGI and IFIH1/MDA5 via two mechanisms: binds double-stranded RNA (dsRNA), enhancing the binding of RIGI and IFIH1/MDA5 to dsRNA and promotes 'Lys-63'-linked ubiquitination and subsequent activation of RIGI and IFIH1/MDA5. The sequence is that of Zinc finger CCHC domain-containing protein 3 from Mus musculus (Mouse).